The sequence spans 683 residues: U4/U6 small nuclear ribonucleoprotein Prp3 (683 aa).

A PWI domain is found at 1 to 87 (MALSKRELDE…HSKSSSDRSR (87 aa)). The segment covering 73-107 (GRSSRHSKSSSDRSRKRELKEVFGDDSEISKESSG) has biased composition (basic and acidic residues). The disordered stretch occupies residues 73-135 (GRSSRHSKSS…IPGPPSESPG (63 aa)). Lysine 139 participates in a covalent cross-link: Glycyl lysine isopeptide (Lys-Gly) (interchain with G-Cter in SUMO2). The disordered stretch occupies residues 153–183 (IEERKKQLSFISPPTPQPKTPSSSQPERLPI). Position 164 is a phosphoserine (serine 164). Threonine 167 is subject to Phosphothreonine. Residues lysine 244 and lysine 252 each participate in a glycyl lysine isopeptide (Lys-Gly) (interchain with G-Cter in SUMO2) cross-link. The segment at 416-550 (NLVEHPAQLN…VHISVYRVRN (135 aa)) is mediates interaction with SART3. A Phosphoserine modification is found at serine 619.

As to quaternary structure, component of the precatalytic spliceosome (spliceosome B complex). Component of the U4/U6-U5 tri-snRNP complex, a building block of the precatalytic spliceosome (spliceosome B complex). The U4/U6-U5 tri-snRNP complex is composed of the U4, U6 and U5 snRNAs and at least PRPF3, PRPF4, PRPF6, PRPF8, PRPF31, SNRNP200, TXNL4A, SNRNP40, SNRPB, SNRPD1, SNRPD2, SNRPD3, SNRPE, SNRPF, SNRPG, DDX23, CD2BP2, PPIH, SNU13, EFTUD2, SART1 and USP39, plus LSM2, LSM3, LSM4, LSM5, LSM6, LSM7 and LSM8. Interacts directly with PRPF4. Part of a heteromeric complex containing PPIH, PRPF3 and PRPF4 that is stable in the absence of RNA. Interacts with SART3; the interaction is direct and recruits the deubiquitinase USP4 to PRPF3. Interacts with PRPF19. Interacts ('Lys-63'-linked polyubiquitinated) with PRPF8 (via the MPN (JAB/Mov34) domain); may stabilize the U4/U6-U5 tri-snRNP complex. Interacts with ERCC6. In terms of processing, ubiquitinated. Undergoes 'Lys-63'-linked polyubiquitination by PRPF19 and deubiquitination by USP4. 'Lys-63'-linked ubiquitination increases the affinity for PRPF8 and may regulate the assembly of the U4/U6-U5 tri-snRNP complex.

It is found in the nucleus. The protein resides in the nucleus speckle. Functionally, plays a role in pre-mRNA splicing as component of the U4/U6-U5 tri-snRNP complex that is involved in spliceosome assembly, and as component of the precatalytic spliceosome (spliceosome B complex). In Pongo abelii (Sumatran orangutan), this protein is U4/U6 small nuclear ribonucleoprotein Prp3 (PRPF3).